The following is a 702-amino-acid chain: Capsid vertex component 1 (702 aa).

A disordered region spans residues 200–244 (MGESGTPTPQASSVSGGAGPAVVGTPDPPISPEEQLTAPGGDTAT). Over residues 210 to 224 (ASSVSGGAGPAVVGT) the composition is skewed to low complexity.

This sequence belongs to the herpesviridae CVC1 protein family. Interacts (via C-terminus) with capsid vertex component 2/CVC2.

Its subcellular location is the virion. It localises to the host nucleus. In terms of biological role, capsid vertex-specific component that plays a role during viral DNA encapsidation, assuring correct genome cleavage and presumably stabilizing capsids that contain full-length viral genomes. The protein is Capsid vertex component 1 of Homo sapiens (Human).